The primary structure comprises 812 residues: Transcription-repair-coupling factor (812 aa).

The region spanning 280-441 (DMSKPIPMDR…MTGIKDLSII (162 aa)) is the Helicase ATP-binding domain. ATP is bound at residue 293-300 (GDVGFGKT). Residues 394 to 397 (DEEH) carry the DEEH box motif. In terms of domain architecture, Helicase C-terminal spans 462-621 (LIRKTILREI…NQDLEIRGVG (160 aa)).

It in the N-terminal section; belongs to the UvrB family. This sequence in the C-terminal section; belongs to the helicase family. RecG subfamily.

The protein resides in the cytoplasm. Functionally, couples transcription and DNA repair by recognizing RNA polymerase (RNAP) stalled at DNA lesions. Mediates ATP-dependent release of RNAP and its truncated transcript from the DNA, and recruitment of nucleotide excision repair machinery to the damaged site. The protein is Transcription-repair-coupling factor (mfd) of Buchnera aphidicola subsp. Acyrthosiphon pisum (strain APS) (Acyrthosiphon pisum symbiotic bacterium).